A 314-amino-acid polypeptide reads, in one-letter code: Fumarylacetoacetate hydrolase domain-containing protein 2 (314 aa).

A divalent metal cation contacts are provided by E159, E161, and D190. K203 carries the post-translational modification N6-acetyllysine; alternate. K203 is subject to N6-succinyllysine; alternate. N6-acetyllysine is present on K234.

This sequence belongs to the FAH family. Requires Ca(2+) as cofactor. The cofactor is Mg(2+).

In terms of biological role, may have hydrolase activity. This Pongo abelii (Sumatran orangutan) protein is Fumarylacetoacetate hydrolase domain-containing protein 2 (FAHD2).